The sequence spans 343 residues: N-malonyltransferase FDB2 (343 aa).

Catalysis depends on cysteine 107, which acts as the Acyl-thioester intermediate. The Proton acceptor role is filled by histidine 155. Aspartate 170 is an active-site residue.

The protein belongs to the arylamine N-acetyltransferase family.

Its pathway is xenobiotic degradation. Functionally, N-malonyltransferase; part of the Fusarium detoxification of benzoxazolinone cluster involved in the degradation of benzoxazolinones produced by the host plant. Maize, wheat, and rye produce the 2 benzoxazinone phytoanticipins 2,4-dihy-droxy-7-methoxy-1,4-benzoxazin-3-one (DIMBOA) and 2,4-dihydroxy-1,4-benzoxazin-3-one (DIBOA) that, due to their inherent instability once released, spontaneously degrade to the more stable corresponding benzoxazolinones, 6-methoxy-2-benzoxazolinone (MBOA) and 2-benzoxazolinone (BOA), respectively. The first step in the detoxification of benzoxazolinones involves the hydrolysis of the cyclic ester bond of benzoxazolinones by the gamma-lactamase FDB1 to aminophenols. FDB1 is able to convert BOA into 2-aminophenol (2-AP), as well as MBOA into 5-methoxy-2-aminophenol (2-AMP). The N-malonyltransferase FDB2 then metabolizes aminophenols via N-malonylation to non-toxic malonamic acids. FDB2 converts 2-AP into N-(2-hydroxyphenyl) malonamic acid (HPMA) and 2-AMP into N-(2-hydroxy-4-methoxyphenyl) malonamic acid (HMPMA). The cluster also contains 2 transcription factors (FDB3 and FPSE_08121), an aldo-keto reductase (FPSE_08125) that possibly associates with a ketone component of BOA and MBOA degradation, an esterase (FPSE_08126), an acyl-CoA transferase (FPSE_08120), a solute carrier protein (FPSE_08119) and a transmembrane transporter (FPSE_08127) proposed to shuttle metabolites of benzoxazolinone degradation. This Fusarium pseudograminearum (strain CS3096) (Wheat and barley crown-rot fungus) protein is N-malonyltransferase FDB2.